The primary structure comprises 161 residues: Nucleotide-binding protein XOO0647 (161 aa).

It belongs to the YajQ family.

Nucleotide-binding protein. This chain is Nucleotide-binding protein XOO0647, found in Xanthomonas oryzae pv. oryzae (strain MAFF 311018).